The sequence spans 99 residues: Small ribosomal subunit protein bS18 (99 aa).

The segment at 1–25 is disordered; sequence MAESKGRPGSASQRPTGGDKAIAGQ.

The protein belongs to the bacterial ribosomal protein bS18 family. Part of the 30S ribosomal subunit. Forms a tight heterodimer with protein bS6.

Binds as a heterodimer with protein bS6 to the central domain of the 16S rRNA, where it helps stabilize the platform of the 30S subunit. In Solibacter usitatus (strain Ellin6076), this protein is Small ribosomal subunit protein bS18.